The sequence spans 186 residues: Proline-rich protein 3 (186 aa).

The disordered stretch occupies residues 1-97 (MPKRKKQNQP…LGPRSSPYGR (97 aa)). Pro residues-rich tracts occupy residues 33–44 (MGPPSLLGPPPM) and 67–79 (MIPPLLSLPPPPR). The C3H1-type zinc-finger motif lies at 153 to 181 (KSDRPVCRHFSKKGHCRYEDHCAFYHPGV).

This chain is Proline-rich protein 3 (Prr3), found in Rattus norvegicus (Rat).